Reading from the N-terminus, the 709-residue chain is ATP-binding cassette sub-family F member 3 (709 aa).

Alanine 2 carries the post-translational modification N-acetylalanine. At serine 83 the chain carries Phosphoserine. Basic and acidic residues predominate over residues 129–143 (RLKAKQEKRSEKETL). The segment at 129-171 (RLKAKQEKRSEKETLKTSNPLVLEEASASQAGSRKESRLESSG) is disordered. Serine 155, serine 157, and serine 161 each carry phosphoserine. A compositionally biased stretch (basic and acidic residues) spans 161–171 (SRKESRLESSG). ABC transporter domains lie at 178–424 (VRIE…LNQQ) and 492–707 (LQLD…RREG). 210–217 (GRNGLGKT) lines the ATP pocket. A Phosphoserine modification is found at serine 283. 525–532 (GENGAGKS) contacts ATP.

The protein belongs to the ABC transporter superfamily. ABCF family. EF3 subfamily.

Its function is as follows. Displays an antiviral effect against flaviviruses such as west Nile virus (WNV) in the presence of OAS1B. This is ATP-binding cassette sub-family F member 3 (Abcf3) from Mus musculus (Mouse).